The following is a 714-amino-acid chain: Neutral ceramidase A (714 aa).

The first 23 residues, 1 to 23 (MKRSIVFIYSLVILLLSVGFIDA), serve as a signal peptide directing secretion. N-linked (GlcNAc...) asparagine glycans are attached at residues asparagine 218 and asparagine 246. Catalysis depends on serine 293, which acts as the Nucleophile. Asparagine 353, asparagine 373, asparagine 416, asparagine 571, asparagine 610, and asparagine 700 each carry an N-linked (GlcNAc...) asparagine glycan.

This sequence belongs to the neutral ceramidase family.

The protein localises to the secreted. It catalyses the reaction an N-acylsphing-4-enine + H2O = sphing-4-enine + a fatty acid. Hydrolyzes the sphingolipid ceramide into sphingosine and free fatty acid at an optimal pH of 3.0. Has no activity toward glycosphingolipids, such as GalCer and Galbeta1-3GalNAcbeta1-4(NeuAcalpha2-3)Galbeta1-4Glcbeta1-1'Cer or sphingomyelin. The sequence is that of Neutral ceramidase A (dcd2A) from Dictyostelium discoideum (Social amoeba).